A 302-amino-acid chain; its full sequence is UDP-N-acetylenolpyruvoylglucosamine reductase (302 aa).

In terms of domain architecture, FAD-binding PCMH-type spans 23–188 (KVGGNAEIFF…LKAVFKVNKG (166 aa)). Arginine 168 is a catalytic residue. Serine 217 (proton donor) is an active-site residue. The active site involves glutamate 287.

This sequence belongs to the MurB family. FAD serves as cofactor.

It localises to the cytoplasm. It carries out the reaction UDP-N-acetyl-alpha-D-muramate + NADP(+) = UDP-N-acetyl-3-O-(1-carboxyvinyl)-alpha-D-glucosamine + NADPH + H(+). Its pathway is cell wall biogenesis; peptidoglycan biosynthesis. Functionally, cell wall formation. In Rickettsia bellii (strain RML369-C), this protein is UDP-N-acetylenolpyruvoylglucosamine reductase.